We begin with the raw amino-acid sequence, 229 residues long: Triosephosphate isomerase (229 aa).

Residue 6-8 (NLK) participates in substrate binding. The active-site Electrophile is H85. E152 serves as the catalytic Proton acceptor. Residues G158 and S188 each coordinate substrate.

The protein belongs to the triosephosphate isomerase family. Homodimer.

It is found in the cytoplasm. It catalyses the reaction D-glyceraldehyde 3-phosphate = dihydroxyacetone phosphate. Its pathway is carbohydrate biosynthesis; gluconeogenesis. The protein operates within carbohydrate degradation; glycolysis; D-glyceraldehyde 3-phosphate from glycerone phosphate: step 1/1. Involved in the gluconeogenesis. Catalyzes stereospecifically the conversion of dihydroxyacetone phosphate (DHAP) to D-glyceraldehyde-3-phosphate (G3P). This is Triosephosphate isomerase from Campylobacter curvus (strain 525.92).